The following is a 295-amino-acid chain: sn-glycerol-3-phosphate transport system permease protein UgpA (295 aa).

Residues 1–11 (MSSSRPVFRSR) are Cytoplasmic-facing. Residues 12-32 (WLPYLLVAPQLVITVIFFIWP) traverse the membrane as a helical segment. Residues 33 to 80 (AGEALWYSLQSVDPFGFSSQFVGLENFVALFHDSYYLDAFWTTIKFSA) are Periplasmic-facing. Positions 76–284 (IKFSALVTFS…FLVIILTVVQ (209 aa)) constitute an ABC transmembrane type-1 domain. The helical transmembrane segment at 81-101 (LVTFSGLLVSLFFAALVDYVV) threads the bilayer. Residues 102-109 (RGSRFYQT) lie on the Cytoplasmic side of the membrane. A helical membrane pass occupies residues 110–130 (LMLLPYAVAPAVAAVLWIFLF). Residues 131–157 (NPGRGLITHFLGEFGYDWNHAQNSGQA) lie on the Periplasmic side of the membrane. The helical transmembrane segment at 158-178 (MFLVVFASVWKQISYNFLFFF) threads the bilayer. Residues 179 to 207 (AALQSIPRSLVEAAAIDGAGPIRRFFRLS) are Cytoplasmic-facing. Residues 208 to 228 (LPLIAPVSFFLLVVNLVYAFF) traverse the membrane as a helical segment. Residues 229-262 (DTFPVIDAATAGGPVQATTTLIYKIYCEGFTGLD) lie on the Periplasmic side of the membrane. A helical membrane pass occupies residues 263 to 283 (LSASAAQSVVLMFLVIILTVV). Over 284–295 (QFRYVESKVRYQ) the chain is Cytoplasmic.

It belongs to the binding-protein-dependent transport system permease family. UgpAE subfamily. In terms of assembly, the complex is composed of two ATP-binding proteins (UgpC), two transmembrane proteins (UgpA and UgpE) and a solute-binding protein (UgpB).

It is found in the cell inner membrane. Functionally, part of the ABC transporter complex UgpBAEC involved in sn-glycerol-3-phosphate (G3P) import. Probably responsible for the translocation of the substrate across the membrane. This chain is sn-glycerol-3-phosphate transport system permease protein UgpA (ugpA), found in Salmonella typhi.